The following is a 980-amino-acid chain: Ankycorbin (980 aa).

Methionine 1 is subject to N-acetylmethionine. Phosphoserine is present on serine 11. ANK repeat units follow at residues 18–51 (KNDD…KHDS), 52–81 (EGKT…DVTA), 85–114 (TGHS…PAES), 118–147 (SGKT…PINL), 151–180 (DGNI…DVNS), 184–213 (SGRT…DLNL), and 217–247 (LGYN…DADL). Positions 247 to 259 (LKTPTKPKQHDQV) are enriched in basic and acidic residues. The interval 247 to 301 (LKTPTKPKQHDQVSKISSERSGTPKKRKAPPPPISPTQLSDVSSPRSITSTPLSG) is disordered. Threonine 249 carries the post-translational modification Phosphothreonine. The Nuclear localization signal motif lies at 270 to 276 (PKKRKAP). Serine 281, serine 286, and serine 293 each carry phosphoserine. A compositionally biased stretch (polar residues) spans 282-299 (PTQLSDVSSPRSITSTPL). 2 positions are modified to phosphothreonine: threonine 295 and threonine 297. A phosphoserine mark is found at serine 300, serine 304, serine 318, serine 327, serine 329, serine 340, serine 341, serine 350, serine 358, serine 419, serine 512, serine 515, serine 667, and serine 915. The stretch at 349–374 (LSLLQAKVASLTLHNKELQDKLQAKS) forms a coiled coil. Positions 387–423 (YHSTQTDLGPSLGKPGETSPPDSKSSPSVLIHSLGKS) are disordered. Positions 425-947 (TDNDVRIQQL…QHQEVISVYR (523 aa)) form a coiled coil.

As to quaternary structure, interacts with PALLD. Associates with actin. However, does not bind F-actin directly. In terms of tissue distribution, highly expressed in placenta, muscle, kidney and testis. Moderately expressed in heart, brain, lung, liver and intestine. Isoform 2 is widely expressed and expressed in fetal and adult testes, and spermatozoa.

It localises to the cytoplasm. Its subcellular location is the cytoskeleton. It is found in the stress fiber. The protein localises to the cell cortex. The protein resides in the cell junction. It localises to the nucleus. Its function is as follows. Plays a role in actin regulation at the ectoplasmic specialization, a type of cell junction specific to testis. Important for establishment of sperm polarity and normal spermatid adhesion. May also promote integrity of Sertoli cell tight junctions at the blood-testis barrier. This Homo sapiens (Human) protein is Ankycorbin (RAI14).